The sequence spans 126 residues: Urease subunit beta (126 aa).

The protein belongs to the urease beta subunit family. As to quaternary structure, heterotrimer of UreA (gamma), UreB (beta) and UreC (alpha) subunits. Three heterotrimers associate to form the active enzyme.

It localises to the cytoplasm. The catalysed reaction is urea + 2 H2O + H(+) = hydrogencarbonate + 2 NH4(+). Its pathway is nitrogen metabolism; urea degradation; CO(2) and NH(3) from urea (urease route): step 1/1. The sequence is that of Urease subunit beta from Sporosarcina pasteurii (Bacillus pasteurii).